The primary structure comprises 117 residues: NADH-ubiquinone oxidoreductase chain 3 (117 aa).

3 helical membrane-spanning segments follow: residues 4-24 (IIFI…LASI), 60-80 (ITII…MIII), and 86-106 (IMIW…GLYH).

Belongs to the complex I subunit 3 family.

The protein resides in the mitochondrion membrane. The enzyme catalyses a ubiquinone + NADH + 5 H(+)(in) = a ubiquinol + NAD(+) + 4 H(+)(out). Core subunit of the mitochondrial membrane respiratory chain NADH dehydrogenase (Complex I) that is believed to belong to the minimal assembly required for catalysis. Complex I functions in the transfer of electrons from NADH to the respiratory chain. The immediate electron acceptor for the enzyme is believed to be ubiquinone. The chain is NADH-ubiquinone oxidoreductase chain 3 (mt:ND3) from Drosophila melanogaster (Fruit fly).